We begin with the raw amino-acid sequence, 153 residues long: 17.3 kDa class I heat shock protein (153 aa).

The sHSP domain occupies 39–153; that stretch reads ENSAFVSTRV…PDVKAIDISG (115 aa).

It belongs to the small heat shock protein (HSP20) family. In terms of assembly, forms oligomeric structures.

The protein localises to the cytoplasm. In Glycine max (Soybean), this protein is 17.3 kDa class I heat shock protein (HSP17.3-B).